Consider the following 227-residue polypeptide: Probable FKBP-type 25 kDa peptidyl-prolyl cis-trans isomerase (227 aa).

The PPIase FKBP-type domain occupies 144 to 227 (ATQVHVRYRG…VFEIDLLGFR (84 aa)).

The protein belongs to the FKBP-type PPIase family.

It catalyses the reaction [protein]-peptidylproline (omega=180) = [protein]-peptidylproline (omega=0). Functionally, PPIases accelerate the folding of proteins. In Pseudomonas aeruginosa (strain ATCC 15692 / DSM 22644 / CIP 104116 / JCM 14847 / LMG 12228 / 1C / PRS 101 / PAO1), this protein is Probable FKBP-type 25 kDa peptidyl-prolyl cis-trans isomerase (fkl).